A 374-amino-acid polypeptide reads, in one-letter code: Chaperone protein DnaJ (374 aa).

A J domain is found at 4–69 (DFYETLCVSR…QKRAAYDRFG (66 aa)). A CR-type zinc finger spans residues 131 to 210 (GKTAQIRVPT…CSGQGRLTEE (80 aa)). Residues cysteine 144, cysteine 147, cysteine 161, cysteine 164, cysteine 184, cysteine 187, cysteine 198, and cysteine 201 each contribute to the Zn(2+) site. CXXCXGXG motif repeat units follow at residues 144–151 (CDECAGSG), 161–168 (CPMCHGAG), 184–191 (CPQCQGRG), and 198–205 (CRKCSGQG).

It belongs to the DnaJ family. In terms of assembly, homodimer. Requires Zn(2+) as cofactor.

It is found in the cytoplasm. Functionally, participates actively in the response to hyperosmotic and heat shock by preventing the aggregation of stress-denatured proteins and by disaggregating proteins, also in an autonomous, DnaK-independent fashion. Unfolded proteins bind initially to DnaJ; upon interaction with the DnaJ-bound protein, DnaK hydrolyzes its bound ATP, resulting in the formation of a stable complex. GrpE releases ADP from DnaK; ATP binding to DnaK triggers the release of the substrate protein, thus completing the reaction cycle. Several rounds of ATP-dependent interactions between DnaJ, DnaK and GrpE are required for fully efficient folding. Also involved, together with DnaK and GrpE, in the DNA replication of plasmids through activation of initiation proteins. This chain is Chaperone protein DnaJ, found in Chelativorans sp. (strain BNC1).